The sequence spans 558 residues: Membrane transporter D2 (558 aa).

The tract at residues 1–28 is disordered; the sequence is MTLKKRSSAPELPTSLDEDEEEDSPQPL. The Cytoplasmic portion of the chain corresponds to 1–38; that stretch reads MTLKKRSSAPELPTSLDEDEEEDSPQPLSNTPFFSMKN. A helical transmembrane segment spans residues 39 to 59; it reads LIVATPIILTPLLYGYNLGFV. The Extracellular segment spans residues 60 to 152; sequence GPYSTMYGYA…QVGYSSIQSG (93 aa). A helical membrane pass occupies residues 153–173; it reads VFAGSLVIGSTMGALMGGYLT. Topologically, residues 174–179 are cytoplasmic; sequence KRLDYC. Residues 180–200 traverse the membrane as a helical segment; it reads KSFLFIGLLSVIGNVLTHVAT. The Extracellular segment spans residues 201-204; sequence GLFH. Residues 205–225 traverse the membrane as a helical segment; that stretch reads YWVLFVARIVLGFPLGWQSIT. At 226 to 241 the chain is on the cytoplasmic side; that stretch reads SSHYTDKFAPANHAKT. Residues 242–262 form a helical membrane-spanning segment; that stretch reads LGTLFQVSVSTGIFVTSFFGL. Topologically, residues 263-281 are extracellular; it reads VLGNTIQYDAASNANTMGR. Residues 282-302 form a helical membrane-spanning segment; that stretch reads MQGLVSVSTLLSIFVVFLPLI. Topologically, residues 303–335 are cytoplasmic; that stretch reads TKDGYSKSRRGDYEGENSEDASRKAAEEYTMTQ. The chain crosses the membrane as a helical span at residues 336–356; that stretch reads MIGPILNGVAMGCVTQLTGIN. Over 357–373 the chain is Extracellular; that stretch reads ANMNFAPTIMSNLGLQP. A helical transmembrane segment spans residues 374-394; that stretch reads LVGNIIVMAWNMLATFCVIPL. Residues 395–402 lie on the Cytoplasmic side of the membrane; that stretch reads SRRFSMRT. Residues 403–423 form a helical membrane-spanning segment; the sequence is LFLFCGFVGSLCCVFLGGIPV. Over 424–441 the chain is Extracellular; it reads YPGVTKSDKAISGIAITG. The chain crosses the membrane as a helical span at residues 442 to 463; that stretch reads IAIFIALYEMGVGPCFYVLAVD. Residues 464-478 lie on the Cytoplasmic side of the membrane; it reads VFPESFRPIGSSITV. Residues 479 to 499 form a helical membrane-spanning segment; it reads GVMFIFNLIINICYPIATEGI. Residues 500-512 lie on the Extracellular side of the membrane; sequence SGGPSGNPNKGQA. The chain crosses the membrane as a helical span at residues 513–533; it reads VAFIFFGCIGVVACVIEYFFL. The Cytoplasmic portion of the chain corresponds to 534 to 558; it reads QPWVEPEAKMTDDLDGAAVPEGKHD.

The protein belongs to the major facilitator superfamily. Sugar transporter (TC 2.A.1.1) family.

It is found in the membrane. This Leishmania donovani protein is Membrane transporter D2.